A 285-amino-acid chain; its full sequence is Ubiquinone biosynthesis protein COQ4, mitochondrial (285 aa).

A mitochondrion-targeting transit peptide spans 1 to 11; it reads MPPTVRQGIRT. Residues His166, Asp167, His170, and Glu182 each coordinate Zn(2+).

Belongs to the COQ4 family. Component of a multi-subunit COQ enzyme complex, composed of at least COQ3, COQ4, COQ5, COQ6, COQ7 and COQ9. The cofactor is Zn(2+).

The protein resides in the mitochondrion inner membrane. It carries out the reaction a 4-hydroxy-3-methoxy-5-(all-trans-polyprenyl)benzoate + H(+) = a 2-methoxy-6-(all-trans-polyprenyl)phenol + CO2. It participates in cofactor biosynthesis; ubiquinone biosynthesis. Functionally, lyase that catalyzes the C1-decarboxylation of 4-hydroxy-3-methoxy-5-(all-trans-polyprenyl)benzoic acid into 2-methoxy-6-(all-trans-polyprenyl)phenol during ubiquinone biosynthesis. The chain is Ubiquinone biosynthesis protein COQ4, mitochondrial from Paracoccidioides brasiliensis (strain Pb18).